The following is a 1230-amino-acid chain: DNA-directed RNA polymerase, mitochondrial (1230 aa).

The transit peptide at 1–41 directs the protein to the mitochondrion; sequence MSALCWGRGAAGLKRALRPCGRPGLPGKEGTAGGVCGPRRS. 3 disordered regions span residues 18-55, 95-115, and 731-750; these read RPCG…DRRK, GSGD…KDAT, and VPAP…PHSA. Pro residues predominate over residues 732–744; it reads PAPPSEAPQPPEA. A mediates interaction with TEFM region spans residues 802-1230; that stretch reads FRGRTYPCPP…QVKRSTYFFS (429 aa). Catalysis depends on residues aspartate 922, lysine 991, and aspartate 1151.

It belongs to the phage and mitochondrial RNA polymerase family. Homodimer. Component of the mitochondrial transcription initiation complex, composed at least of TFB2M, TFAM and POLRMT. In this complex TFAM recruits POLRMT to the promoter whereas TFB2M induces structural changes in POLRMT to enable promoter opening and trapping of the DNA non-template strand. Upon metabolic stress, forms a complex composed of FOXO3, SIRT3 and mitochondrial RNA polymerase POLRMT; the complex is recruited to mtDNA in a SIRT3-dependent manner. Also forms a complex composed of FOXO3, SIRT3, TFAM and POLRMT. Interacts with TFB1M and TFB2M, leading to the stimulation of transcription. Interacts with TEFM. Interacts with MTRES1.

It localises to the mitochondrion. The enzyme catalyses RNA(n) + a ribonucleoside 5'-triphosphate = RNA(n+1) + diphosphate. In terms of biological role, DNA-dependent RNA polymerase catalyzes the transcription of mitochondrial DNA into RNA using the four ribonucleoside triphosphates as substrates. Component of the mitochondrial transcription initiation complex, composed at least of TFB2M, TFAM and POLRMT that is required for basal transcription of mitochondrial DNA. In this complex, TFAM recruits POLRMT to a specific promoter whereas TFB2M induces structural changes in POLRMT to enable promoter opening and trapping of the DNA non-template strand. Has DNA primase activity. Catalyzes the synthesis of short RNA primers that are necessary for the initiation of lagging-strand DNA synthesis from the origin of light-strand DNA replication (OriL). The sequence is that of DNA-directed RNA polymerase, mitochondrial from Homo sapiens (Human).